The sequence spans 218 residues: Thiopurine S-methyltransferase (218 aa).

Residues Trp-10, Leu-45, Glu-66, and Arg-123 each coordinate S-adenosyl-L-methionine.

The protein belongs to the class I-like SAM-binding methyltransferase superfamily. TPMT family.

Its subcellular location is the cytoplasm. It catalyses the reaction S-adenosyl-L-methionine + a thiopurine = S-adenosyl-L-homocysteine + a thiopurine S-methylether.. The protein is Thiopurine S-methyltransferase of Shewanella sp. (strain MR-4).